The sequence spans 1380 residues: MDLSLQLQIHGALINKGPSCTSYWASSSSLSLPRDFISSSTFLLHRRLRRRSCSRSRGIRLRRSGFSAMPCSSSDTLTASRVGCGGGGGGGAVGGGAENASVANFKLNESTFIASLMPKKEIRADCFIEAHPEYDGRGVVIAIFDSGFDPSAAGLHVTSDGKPKVLDVIDCTGSGDIDTSTVVKANEDGHIRGASGATLVVNSSWKNPTGEWRVGSKLVYQLFTDDLTSRVKKERRKSWDEKNQEEIAKAVNNLYDFDQKHSKVEDAKLKKTREDLQSKVDFLKKQADKYEDKGPVIDAVVWHDGEVWRVALDTQSLEEDPDSGKLADFSPLTNYRIERKYGVFSRLDACSFVANVYDEGKVLSIVTDSSPHGTHVAGIATAHHPEEHLLNGVAPGAQIISCKIGDSRLGSMETGTGLTRALIAALEHNCDLVNMSYGEPALLPDYGRFVDLVTEAVNKRRLIFVSSAGNSGPALTTVGAPGGTTSSIIGVGAYVSPAMAAGAHSVVEPPSEGLEYTWSSRGPTSDGDLGVCISAPGGAVAPVPTWTLQRRMLMNGTSMASPSACGAIALLLSAMKAEGIPVSPYSVRRALENTSTPVGDLPEDKLTTGQGLMQVDKAYEYLKQFQDYPCVFYQIKVNLSGKTIPTSRGIYLREGTACRQSTEWTIQVDPKFHEGASNLKELVPFEECLELHSTDEGVVRVPDYLLLTNNGRGFNVVVDPTNLGDGVHYFEVYGIDCKAPERGPLFRIPVTIIIPKTVANQPPVISFQQMSFISGHIERRYIEVPHGATWAEATMRTSGFDTTRRFYIDTLQVCPLRRPIKWESAPTFASPSAKSFVFPVVSGQTMELAIAQFWSSGLGSREPTIVDFEIEFHGVGVDKEELLLDGSEAPIKVEAEALLASEKLVPIAVLNKIRVPYQPIDAQLKTLSTGRDRLLSGKQILALTLTYKFKLEDSAEVKPYIPLLNNRIYDTKFESQFFMISDTNKRVYAMGDVYPESSKLPKGEYKLQLYLRHENVELLEKLKQLTVFIERNMGEIRLNLHSEPDGPFTGNGAFKSSVLMPGVKEAFYLGPPTKDKLPKNTPQGSMLVGEISYGKLSFDEKEGKNPKDNPVSYPISYVVPPNKPEEDKKAASAPTCSKSVSERLEQEVRDTKIKFLGNLKQETEEERSEWRKLCTCLKSEYPDYTPLLAKILEGLLSRSDAGDKISHHEEIIEAANEVVRSVDVDELARFLLDKTEPEDDEAEKLKKKMEVTRDQLADALYQKGLAMARIENLKGEKEGEGEEESSQKDKFEENFKELTKWVDVKSSKYGTLTVLREKRLSRLGTALKVLDDLIQNENETANKKLYELKLDLLEEIGWSHLVTYEKQWMQVRFPKSLPLF.

The 510-residue stretch at 110-619 folds into the Peptidase S8 domain; sequence STFIASLMPK…QGLMQVDKAY (510 aa). Residues Asp145, His372, and Ser558 each act as charge relay system in the active site. The segment at 1099 to 1143 is disordered; it reads DEKEGKNPKDNPVSYPISYVVPPNKPEEDKKAASAPTCSKSVSER. The segment covering 1110–1120 has biased composition (low complexity); it reads PVSYPISYVVP. Coiled coils occupy residues 1152 to 1181 and 1238 to 1300; these read KIKF…KSEY and EDDE…ELTK.

Belongs to the peptidase S8 family. In terms of assembly, assembles into a large oligomeric complex containing two related proteins 153 and 142 kDa that are derived from the single TPP2 gene. The 142 kDa form mainly differs from the 153 kDa form by a truncation at the C-terminal end.

It catalyses the reaction Release of an N-terminal tripeptide from a polypeptide.. Its activity is regulated as follows. Inhibited by alanine-alanine-phenylalanine-chloromethylketone, butabindide and phenylmethanesulfonyl fluoride (PMSF), but not by leupeptin, N-ethylmaleimide, EDTA, MG132 and lactacystin. In terms of biological role, serine protease of the proteasome pathway that may function with the 20S proteasome to degrade oxidized proteins generated by environmental stress. The protein is Tripeptidyl-peptidase 2 (TPP2) of Arabidopsis thaliana (Mouse-ear cress).